The following is a 197-amino-acid chain: Ribonuclease HII (197 aa).

The RNase H type-2 domain maps to 11–197 (NLIAGVDEVG…FAPVRKILGL (187 aa)). A divalent metal cation-binding residues include Asp-17, Glu-18, and Asp-109.

It belongs to the RNase HII family. Mn(2+) is required as a cofactor. It depends on Mg(2+) as a cofactor.

It is found in the cytoplasm. It carries out the reaction Endonucleolytic cleavage to 5'-phosphomonoester.. In terms of biological role, endonuclease that specifically degrades the RNA of RNA-DNA hybrids. The polypeptide is Ribonuclease HII (Haemophilus ducreyi (strain 35000HP / ATCC 700724)).